Here is a 202-residue protein sequence, read N- to C-terminus: Transmembrane 4 L6 family member 1 (202 aa).

Residues 1 to 9 (MCYGKCARC) lie on the Cytoplasmic side of the membrane. A helical membrane pass occupies residues 10-30 (IGHSLVGLALLCIAANILLYF). Topologically, residues 31–49 (PNGETKYASENHLSRFVWF) are extracellular. Residues 50–70 (FSGIVGGGLLMLLPAFVFIGL) traverse the membrane as a helical segment. The Cytoplasmic segment spans residues 71-93 (EQDDCCGCCGHENCGKRCAMLSS). Residues 94-114 (VLAALIGIAGSGYCVIVAALG) form a helical membrane-spanning segment. At 115–161 (LAEGPLCLDSLGQWNYTFASTEGQYLLDTSTWSECTEPKHIVEWNVS) the chain is on the extracellular side. N129 and N159 each carry an N-linked (GlcNAc...) asparagine glycan. A helical membrane pass occupies residues 162 to 182 (LFSILLALGGIEFILCLIQVI). Residues 183-202 (NGVLGGICGFCCSHQQQYDC) lie on the Cytoplasmic side of the membrane.

It belongs to the L6 tetraspanin family. As to quaternary structure, present in high molecular weight complexes in tumor cells. Interacts with SDCBP2. As to expression, highly expressed in lung, breast, colon and ovarian carcinomas. It is also present on some normal cells, endothelial cells in particular.

The protein localises to the membrane. This Homo sapiens (Human) protein is Transmembrane 4 L6 family member 1 (TM4SF1).